Consider the following 301-residue polypeptide: Ribosomal RNA large subunit methyltransferase F (301 aa).

Belongs to the methyltransferase superfamily. METTL16/RlmF family.

The protein localises to the cytoplasm. It carries out the reaction adenosine(1618) in 23S rRNA + S-adenosyl-L-methionine = N(6)-methyladenosine(1618) in 23S rRNA + S-adenosyl-L-homocysteine + H(+). In terms of biological role, specifically methylates the adenine in position 1618 of 23S rRNA. This Colwellia psychrerythraea (strain 34H / ATCC BAA-681) (Vibrio psychroerythus) protein is Ribosomal RNA large subunit methyltransferase F.